We begin with the raw amino-acid sequence, 83 residues long: MQNDAGEFVDLYCPRKCSASNRLIHAKDHASVQLVIADVDPATGRAADTSKMYVVCGAIRRMGESDDCIVRLTKKDGILAKNY.

This sequence belongs to the eukaryotic ribosomal protein eS21 family. In terms of assembly, component of the 40S small ribosomal subunit.

The protein localises to the cytoplasm. The protein resides in the cytosol. It is found in the rough endoplasmic reticulum. The sequence is that of Small ribosomal subunit protein eS21 (RpS21) from Spodoptera frugiperda (Fall armyworm).